The following is a 246-amino-acid chain: U11/U12 small nuclear ribonucleoprotein 35 kDa protein (246 aa).

The 79-residue stretch at 51–129 (LTLFVARLNL…HEIFVDYELE (79 aa)) folds into the RRM domain. Lys172 is covalently cross-linked (Glycyl lysine isopeptide (Lys-Gly) (interchain with G-Cter in SUMO2)). The segment at 187-217 (SRSRERHWDSRTRDRDHDRGREKRWQEREPT) is disordered. Positions 192–217 (RHWDSRTRDRDHDRGREKRWQEREPT) are enriched in basic and acidic residues.

As to quaternary structure, component of the U11/U12 snRNPs that are part of the U12-type spliceosome. In terms of tissue distribution, expressed in heart, liver, skeletal muscle and pancreas.

The protein localises to the nucleus. This is U11/U12 small nuclear ribonucleoprotein 35 kDa protein (SNRNP35) from Homo sapiens (Human).